The chain runs to 230 residues: Small ribosomal subunit protein uS3 (230 aa).

The KH type-2 domain occupies 39–107 (VRNYLRQKLA…PVHVNIEEIR (69 aa)). The disordered stretch occupies residues 210–230 (SSKPEHESKQRKAGRRNAAAN).

This sequence belongs to the universal ribosomal protein uS3 family. Part of the 30S ribosomal subunit. Forms a tight complex with proteins S10 and S14.

In terms of biological role, binds the lower part of the 30S subunit head. Binds mRNA in the 70S ribosome, positioning it for translation. This is Small ribosomal subunit protein uS3 from Neisseria meningitidis serogroup C (strain 053442).